Here is a 130-residue protein sequence, read N- to C-terminus: Small ribosomal subunit protein uS9 (130 aa).

The disordered stretch occupies residues 109-130 (RVKERKKYGQKGARAKFQFSKR).

It belongs to the universal ribosomal protein uS9 family.

The chain is Small ribosomal subunit protein uS9 from Desulfotalea psychrophila (strain LSv54 / DSM 12343).